The chain runs to 263 residues: uncharacterized protein (263 aa).

The region spanning 6 to 121 (TAIIADDEPL…RLQTTCERVK (116 aa)) is the Response regulatory domain. Asp-58 carries the 4-aspartylphosphate modification. An HTH LytTR-type domain is found at 158–263 (IKATQGDDIH…RASQSLFKGM (106 aa)).

This is an uncharacterized protein from Vibrio parahaemolyticus serotype O3:K6 (strain RIMD 2210633).